The primary structure comprises 190 residues: RNA pyrophosphohydrolase (190 aa).

A Nudix hydrolase domain is found at G6 to N149. Residues G38 to G59 carry the Nudix box motif. The disordered stretch occupies residues Q167 to G190.

This sequence belongs to the Nudix hydrolase family. RppH subfamily. The cofactor is a divalent metal cation.

Functionally, accelerates the degradation of transcripts by removing pyrophosphate from the 5'-end of triphosphorylated RNA, leading to a more labile monophosphorylated state that can stimulate subsequent ribonuclease cleavage. The chain is RNA pyrophosphohydrolase from Bordetella parapertussis (strain 12822 / ATCC BAA-587 / NCTC 13253).